The following is a 319-amino-acid chain: L-lactate dehydrogenase (319 aa).

NAD(+) is bound by residues Val17, Asp38, Lys43, Tyr69, and Gly83–Ala84. Substrate contacts are provided by Gln86 and Arg92. NAD(+) is bound by residues Thr105, Ala122–Asn124, and Ser147. Asn124 to Asp127 is a binding site for substrate. Asp152–Arg155 contacts substrate. Arg157 and His172 together coordinate beta-D-fructose 1,6-bisphosphate. The Proton acceptor role is filled by His179. Tyr224 bears the Phosphotyrosine mark. Thr233 provides a ligand contact to substrate.

This sequence belongs to the LDH/MDH superfamily. LDH family. In terms of assembly, homotetramer.

Its subcellular location is the cytoplasm. The catalysed reaction is (S)-lactate + NAD(+) = pyruvate + NADH + H(+). It participates in fermentation; pyruvate fermentation to lactate; (S)-lactate from pyruvate: step 1/1. With respect to regulation, allosterically activated by fructose 1,6-bisphosphate (FBP). In terms of biological role, catalyzes the conversion of lactate to pyruvate. This is L-lactate dehydrogenase from Geobacillus sp. (strain WCH70).